A 143-amino-acid polypeptide reads, in one-letter code: D-aminoacyl-tRNA deacylase (143 aa).

Positions 135–136 (GP) match the Gly-cisPro motif, important for rejection of L-amino acids motif.

It belongs to the DTD family. As to quaternary structure, homodimer.

The protein localises to the cytoplasm. It carries out the reaction glycyl-tRNA(Ala) + H2O = tRNA(Ala) + glycine + H(+). The catalysed reaction is a D-aminoacyl-tRNA + H2O = a tRNA + a D-alpha-amino acid + H(+). An aminoacyl-tRNA editing enzyme that deacylates mischarged D-aminoacyl-tRNAs. Also deacylates mischarged glycyl-tRNA(Ala), protecting cells against glycine mischarging by AlaRS. Acts via tRNA-based rather than protein-based catalysis; rejects L-amino acids rather than detecting D-amino acids in the active site. By recycling D-aminoacyl-tRNA to D-amino acids and free tRNA molecules, this enzyme counteracts the toxicity associated with the formation of D-aminoacyl-tRNA entities in vivo and helps enforce protein L-homochirality. The sequence is that of D-aminoacyl-tRNA deacylase from Mycobacterium bovis (strain ATCC BAA-935 / AF2122/97).